The sequence spans 245 residues: 1-(5-phosphoribosyl)-5-[(5-phosphoribosylamino)methylideneamino] imidazole-4-carboxamide isomerase (245 aa).

Residue D12 is the Proton acceptor of the active site. The active-site Proton donor is D131.

It belongs to the HisA/HisF family.

It is found in the cytoplasm. It carries out the reaction 1-(5-phospho-beta-D-ribosyl)-5-[(5-phospho-beta-D-ribosylamino)methylideneamino]imidazole-4-carboxamide = 5-[(5-phospho-1-deoxy-D-ribulos-1-ylimino)methylamino]-1-(5-phospho-beta-D-ribosyl)imidazole-4-carboxamide. It functions in the pathway amino-acid biosynthesis; L-histidine biosynthesis; L-histidine from 5-phospho-alpha-D-ribose 1-diphosphate: step 4/9. This is 1-(5-phosphoribosyl)-5-[(5-phosphoribosylamino)methylideneamino] imidazole-4-carboxamide isomerase from Thermobifida fusca (strain YX).